A 431-amino-acid polypeptide reads, in one-letter code: UPF0597 protein LCA_0156 (431 aa).

The protein belongs to the UPF0597 family.

This Latilactobacillus sakei subsp. sakei (strain 23K) (Lactobacillus sakei subsp. sakei) protein is UPF0597 protein LCA_0156.